The chain runs to 399 residues: Elongation factor Tu (399 aa).

The tr-type G domain maps to 10-208; that stretch reads KPHVNIGTIG…TVDSYIPEPE (199 aa). Residues 19–26 form a G1 region; the sequence is GHVDHGKT. Residue 19-26 coordinates GTP; sequence GHVDHGKT. Residue threonine 26 participates in Mg(2+) binding. The interval 64–68 is G2; the sequence is GITIN. The tract at residues 85–88 is G3; it reads DAPG. GTP is bound by residues 85–89 and 140–143; these read DAPGH and NKVD. Residues 140–143 are G4; that stretch reads NKVD. The interval 178–180 is G5; sequence SAL.

This sequence belongs to the TRAFAC class translation factor GTPase superfamily. Classic translation factor GTPase family. EF-Tu/EF-1A subfamily. Monomer.

It localises to the cytoplasm. It catalyses the reaction GTP + H2O = GDP + phosphate + H(+). Its function is as follows. GTP hydrolase that promotes the GTP-dependent binding of aminoacyl-tRNA to the A-site of ribosomes during protein biosynthesis. This chain is Elongation factor Tu, found in Streptococcus pyogenes serotype M12 (strain MGAS2096).